We begin with the raw amino-acid sequence, 915 residues long: p53-induced death domain-containing protein 1 (915 aa).

The residue at position 2 (Ala2) is an N-acetylalanine. LRR repeat units lie at residues 131-152 (CLAHLDLSFNRLETLPTCVPEL), 154-176 (GLDALLLSHNHLSELPEALGALP), 177-199 (ALTFLTVTHNRLERLPLTLGSLS), 200-221 (TLQRLDLSENLLDTIPSEIGNL), 223-245 (SLSELNLASNRLQSLPASLAGLR), 246-268 (SLRLLVLHSNLLTSVPTGLVHLP), and 269-290 (LITRLDLRDNRLRDLPAELLDA). Ser304 is modified (phosphoserine). ZU5 domains are found at residues 327–459 (DLDS…VLRP) and 460–601 (VSNT…WYTT). Peptidase S68 regions lie at residues 428–457 (DLETQLEEEAPKRLWARCQVPHFSWFLVVL) and 571–599 (DITTQVALEFTHLYARFQVTHFSWYWLWY). Catalysis depends on residues His449, Ser451, His591, and Ser593. Positions 585–721 (ARFQVTHFSW…TTALDREAQD (137 aa)) are UPA domain. Residues 793–878 (TQSNLLSVAS…DVAEEVRAIL (86 aa)) form the Death domain. The disordered stretch occupies residues 888–915 (SIRRTGLAPEDSTLPGTSASQTPESAQA). The span at 901 to 915 (LPGTSASQTPESAQA) shows a compositional bias: polar residues.

As to quaternary structure, forms a complex named the PIDDosome with CASP2 and CRADD. Forms a complex with IKBKG and RIPK1. Interacts with FADD and MADD. Undergoes autoproteolytic processing whose extent either directs cells towards survival or apoptotic pathways. Autoproteolytically cleaved into two main fragments PIDD-N and PIDD-C. PIDD-C can be further processed into PIDD-CC, a processing which is enhanced by DNA damage. The cleavage producing PIDD-C is required for translocation of PIDD1 to the nucleus upon DNA damage and activation of NF-kappa-B. PIDD-CC mediates the interaction with CRADD and the cleavage producing PIDD-CC is required for the activation of CASP2. PIDD-N remains associated with PIDD-C and PIDD-CC after cleavage. In terms of tissue distribution, ubiquitous.

It localises to the cytoplasm. Its subcellular location is the nucleus. Functionally, component of the DNA damage/stress response pathway that functions downstream of p53/TP53 and can either promote cell survival or apoptosis. Associated with CRADD and the CASP2 caspase, it forms the PIDDosome a complex that activates CASP2 and triggers apoptosis. Associated with IKBKG and RIPK1, it enhances sumoylation and ubiquitination of IKBKG which is important for activation of the transcription factor NF-kappa-B. The sequence is that of p53-induced death domain-containing protein 1 from Mus musculus (Mouse).